Here is an 845-residue protein sequence, read N- to C-terminus: U-box domain-containing protein 52 (845 aa).

Disordered regions lie at residues 180-210 (RPSE…LPPE) and 229-258 (SPAL…EVST). The span at 187–204 (SGSIRFERSSSTSGSTDS) shows a compositional bias: low complexity. A compositionally biased stretch (polar residues) spans 236 to 251 (MGSNAVAQMDTSSSGT). Residues 351–468 (SITDNQVNLN…REKDKLQASL (118 aa)) are a coiled coil. The Protein kinase domain maps to 490 to 754 (FAENLKIGIG…DLKDQIIPAL (265 aa)). ATP-binding positions include 496 to 504 (IGIGAYGSV) and lysine 517. Aspartate 612 functions as the Proton acceptor in the catalytic mechanism. The 72-residue stretch at 774–845 (GPPSHFICPL…AIMEWKSNKR (72 aa)) folds into the U-box domain.

This sequence belongs to the protein kinase superfamily. Ser/Thr protein kinase family.

The enzyme catalyses L-seryl-[protein] + ATP = O-phospho-L-seryl-[protein] + ADP + H(+). The catalysed reaction is L-threonyl-[protein] + ATP = O-phospho-L-threonyl-[protein] + ADP + H(+). It carries out the reaction S-ubiquitinyl-[E2 ubiquitin-conjugating enzyme]-L-cysteine + [acceptor protein]-L-lysine = [E2 ubiquitin-conjugating enzyme]-L-cysteine + N(6)-ubiquitinyl-[acceptor protein]-L-lysine.. Its pathway is protein modification; protein ubiquitination. In terms of biological role, functions as an E3 ubiquitin ligase. The chain is U-box domain-containing protein 52 (PUB52) from Arabidopsis thaliana (Mouse-ear cress).